The chain runs to 485 residues: Neuropeptide F receptor (485 aa).

At Met-1–Ser-91 the chain is on the extracellular side. Residues Met-92 to Ile-112 form a helical membrane-spanning segment. Over Arg-113–Asn-122 the chain is Cytoplasmic. Residues Leu-123 to Thr-143 form a helical membrane-spanning segment. Topologically, residues Leu-144–Thr-163 are extracellular. A disulfide bridge links Cys-161 with Cys-248. Residues Ile-164–Phe-184 form a helical membrane-spanning segment. Residues Asp-185–Gly-202 lie on the Cytoplasmic side of the membrane. Residues Ala-203–Val-223 traverse the membrane as a helical segment. Over Tyr-224–Ser-262 the chain is Extracellular. The helical transmembrane segment at Ile-263–Gly-283 threads the bilayer. At Ile-284–Cys-317 the chain is on the cytoplasmic side. The chain crosses the membrane as a helical span at residues Leu-318 to Leu-338. Topologically, residues Tyr-339–Tyr-355 are extracellular. A helical transmembrane segment spans residues Ala-356 to Leu-376. At Asn-377 to Arg-485 the chain is on the cytoplasmic side.

This sequence belongs to the G-protein coupled receptor 1 family. Expressed in midgut, brain lobes and ventral nerve cord of larvae. In adults, expressed in a pair of dorsolateral neurons in the protocerebrum, and the central complex and a small number of neurons in the subesophageal ganglion (at protein level). Expressed in a subset of sugar-responsive PAIN neurons in the thoracic body but is absent from other peripheral PAIN neurons.

The protein localises to the membrane. Receptor for NPF. Integral part of the sensory system that mediates food signaling, providing the neural basis for the regulation of food response; coordinates larval foraging and social behavior changes during development. Required in dopaminergic (DA) neurons that innervate the mushroom body for satiety to suppress appetitive memory performance; a key factor in the internal state of hunger in the brain. NPF neurons coordinately modulate diverse sensory and motor neurons important for feeding, flight, and locomotion. NPF/NPFR pathway exerts its suppressive effect on larval aversion to diverse stressful stimuli (chemical stress and noxious heat) through attenuation of TRP channel-induced neuronal excitation. NPF neural signaling system plays a physiological role in acute modulation of alcohol sensitivity in adults, rather than a general response to intoxication by sedative agents. Activation and inhibition of the NPF system reduces and enhances ethanol preference, respectively. Sexual experience, the NPF system activity and ethanol consumption are all linked; sexual deprivation is a major contributor to enhanced ethanol preference. In Drosophila melanogaster (Fruit fly), this protein is Neuropeptide F receptor.